The following is a 393-amino-acid chain: MLRRLLERPCTLALLVGSQLAVMMYLSLGGFRSLSALFGRDQGPTFDYSHPRDVYSNLSHLPGAPGGPPAPQGLPYCPERSPLLVGPVSVSFSPVPSLAEIVERNPRVEPGGRYRPAGCEPRSRTAIIVPHRAREHHLRLLLYHLHPFLQRQQLAYGIYVIHQAGNGTFNRAKLLNVGVREALRDEEWDCLFLHDVDLLPENDHNLYVCDPRGPRHVAVAMNKFGYSLPYPQYFGGVSALTPDQYLKMNGFPNEYWGWGGEDDDIATRVRLAGMKISRPPTSVGHYKMVKHRGDKGNEENPHRFDLLVRTQNSWTQDGMNSLTYQLLARELGPLYTNITADIGTDPRGPRAPSGPRYPPGSSQAFRQEMLQRRPPARPGPPPTANHTALRGSH.

The Cytoplasmic segment spans residues 1–10; sequence MLRRLLERPC. The chain crosses the membrane as a helical; Signal-anchor for type II membrane protein span at residues 11 to 31; sequence TLALLVGSQLAVMMYLSLGGF. Residues 32–393 are Lumenal-facing; that stretch reads RSLSALFGRD…ANHTALRGSH (362 aa). A glycan (N-linked (GlcNAc...) asparagine) is linked at Asn-57. The cysteines at positions 77 and 119 are disulfide-linked. 130–134 contributes to the UDP-alpha-D-galactose binding site; sequence PHRAR. Residue Asn-166 is glycosylated (N-linked (GlcNAc...) asparagine). UDP-alpha-D-galactose is bound by residues 169–171, 196–197, Tyr-226, and Trp-258; these read FNR and VD. Cys-190 and Cys-209 are joined by a disulfide. Mn(2+) is bound at residue Asp-197. An N-acetyl-D-glucosamine-binding site is contributed by 260-263; sequence GEDD. Residue His-291 coordinates Mn(2+). 291 to 293 serves as a coordination point for UDP-alpha-D-galactose; sequence HRG. Arg-303 provides a ligand contact to N-acetyl-D-glucosamine. Asn-337 and Asn-385 each carry an N-linked (GlcNAc...) asparagine glycan. Residues 339–393 form a disordered region; sequence TADIGTDPRGPRAPSGPRYPPGSSQAFRQEMLQRRPPARPGPPPTANHTALRGSH.

This sequence belongs to the glycosyltransferase 7 family. The cofactor is Mn(2+).

The protein localises to the golgi apparatus. The protein resides in the golgi stack membrane. The enzyme catalyses an N-acetyl-beta-D-glucosaminyl derivative + UDP-alpha-D-galactose = a beta-D-galactosyl-(1-&gt;4)-N-acetyl-beta-D-glucosaminyl derivative + UDP + H(+). It catalyses the reaction N-acetyl-D-glucosamine + UDP-alpha-D-galactose = beta-D-galactosyl-(1-&gt;4)-N-acetyl-D-glucosamine + UDP + H(+). It carries out the reaction a beta-D-GlcNAc-(1-&gt;3)-beta-D-Gal-(1-&gt;4)-beta-D-Glc-(1&lt;-&gt;1)-Cer(d18:1(4E)) + UDP-alpha-D-galactose = a neolactoside nLc4Cer(d18:1(4E)) + UDP + H(+). The catalysed reaction is a beta-D-glucosylceramide + UDP-alpha-D-galactose = a beta-D-galactosyl-(1-&gt;4)-beta-D-glucosyl-(1&lt;-&gt;1)-ceramide + UDP + H(+). The enzyme catalyses a neolactoside IV(3)-beta-GlcNAc-nLc4Cer + UDP-alpha-D-galactose = a neolactoside nLc6Cer + UDP + H(+). It functions in the pathway protein modification; protein glycosylation. Responsible for the synthesis of complex-type N-linked oligosaccharides in many glycoproteins as well as the carbohydrate moieties of glycolipids. The chain is Beta-1,4-galactosyltransferase 3 (B4GALT3) from Pongo abelii (Sumatran orangutan).